We begin with the raw amino-acid sequence, 135 residues long: Small ribosomal subunit protein bS6 (135 aa).

Residues 96–135 (HAEGPSIQMQKRDERERGDRGDRSDRGDRGDRGDRGGFRR) form a disordered region. The segment covering 105–135 (QKRDERERGDRGDRSDRGDRGDRGDRGGFRR) has biased composition (basic and acidic residues).

The protein belongs to the bacterial ribosomal protein bS6 family.

Functionally, binds together with bS18 to 16S ribosomal RNA. This is Small ribosomal subunit protein bS6 from Cereibacter sphaeroides (strain ATCC 17029 / ATH 2.4.9) (Rhodobacter sphaeroides).